The sequence spans 126 residues: MKANNAEAPDSSNAADTLKWVATFVLLVAAVVGNYLYGELSVVARAAGVIVLIAAALGVAATTTKGKEAIVFARESRMEVRKVVWPTRQETMQTTLIVLAVSIVMALALWGIDGIMVRLVAFATGV.

The next 3 helical transmembrane spans lie at 18–38, 40–60, and 97–117; these read LKWVATFVLLVAAVVGNYLYG, LSVVARAAGVIVLIAAALGVA, and IVLAVSIVMALALWGIDGIMV.

The protein belongs to the SecE/SEC61-gamma family. In terms of assembly, component of the Sec protein translocase complex. Heterotrimer consisting of SecY, SecE and SecG subunits. The heterotrimers can form oligomers, although 1 heterotrimer is thought to be able to translocate proteins. Interacts with the ribosome. Interacts with SecDF, and other proteins may be involved. Interacts with SecA.

Its subcellular location is the cell inner membrane. Essential subunit of the Sec protein translocation channel SecYEG. Clamps together the 2 halves of SecY. May contact the channel plug during translocation. The sequence is that of Protein translocase subunit SecE from Vibrio cholerae serotype O1 (strain ATCC 39315 / El Tor Inaba N16961).